Here is a 678-residue protein sequence, read N- to C-terminus: UvrABC system protein B (678 aa).

The Helicase ATP-binding domain occupies 31–417 (ENLNDGLAHQ…KSGTEIIDQV (387 aa)). Position 44 to 51 (44 to 51 (GVTGSGKT)) interacts with ATP. Residues 97–120 (YYDYYQPEAYVPSSDTFIEKDASI) carry the Beta-hairpin motif. Positions 436–602 (QVDDLLSEAR…GLNKKVGELL (167 aa)) constitute a Helicase C-terminal domain. Positions 603-625 (DIGQGGSNKSRNKPRSQKAAEPA) are disordered. The region spanning 638–673 (QQQIKKLEQQMYKFAQDLEFEKAAAIRDQLHKLREQ) is the UVR domain.

Belongs to the UvrB family. In terms of assembly, forms a heterotetramer with UvrA during the search for lesions. Interacts with UvrC in an incision complex.

It localises to the cytoplasm. Functionally, the UvrABC repair system catalyzes the recognition and processing of DNA lesions. A damage recognition complex composed of 2 UvrA and 2 UvrB subunits scans DNA for abnormalities. Upon binding of the UvrA(2)B(2) complex to a putative damaged site, the DNA wraps around one UvrB monomer. DNA wrap is dependent on ATP binding by UvrB and probably causes local melting of the DNA helix, facilitating insertion of UvrB beta-hairpin between the DNA strands. Then UvrB probes one DNA strand for the presence of a lesion. If a lesion is found the UvrA subunits dissociate and the UvrB-DNA preincision complex is formed. This complex is subsequently bound by UvrC and the second UvrB is released. If no lesion is found, the DNA wraps around the other UvrB subunit that will check the other stand for damage. This chain is UvrABC system protein B, found in Mannheimia succiniciproducens (strain KCTC 0769BP / MBEL55E).